The following is a 117-amino-acid chain: Hemerythrin subunit alpha (117 aa).

Positions 24, 53, 57, 72, 76, 105, and 110 each coordinate Fe cation.

It belongs to the hemerythrin family. Octamer composed of two types of chains: alpha and beta.

Hemerythrin is a respiratory protein in blood cells of certain marine worms. The oxygen-binding site in each chain contains two iron atoms. The chain is Hemerythrin subunit alpha from Lingula anatina (Brachiopod).